The following is a 357-amino-acid chain: Phosphoribosylformylglycinamidine cyclo-ligase (357 aa).

It belongs to the AIR synthase family.

The protein resides in the cytoplasm. It catalyses the reaction 2-formamido-N(1)-(5-O-phospho-beta-D-ribosyl)acetamidine + ATP = 5-amino-1-(5-phospho-beta-D-ribosyl)imidazole + ADP + phosphate + H(+). Its pathway is purine metabolism; IMP biosynthesis via de novo pathway; 5-amino-1-(5-phospho-D-ribosyl)imidazole from N(2)-formyl-N(1)-(5-phospho-D-ribosyl)glycinamide: step 2/2. The polypeptide is Phosphoribosylformylglycinamidine cyclo-ligase (Rhizobium etli (strain ATCC 51251 / DSM 11541 / JCM 21823 / NBRC 15573 / CFN 42)).